A 1028-amino-acid chain; its full sequence is Beta-galactosidase (1028 aa).

2 residues coordinate substrate: Asn-104 and Asp-203. Residue Asp-203 coordinates Na(+). Positions 418, 420, and 463 each coordinate Mg(2+). Substrate-binding positions include Glu-463 and 539 to 542 (EYAH). The active-site Proton donor is the Glu-463. Residue Glu-539 is the Nucleophile of the active site. Asn-599 provides a ligand contact to Mg(2+). Residues Phe-603 and Asn-606 each coordinate Na(+). Positions 606 and 1003 each coordinate substrate.

The protein belongs to the glycosyl hydrolase 2 family. In terms of assembly, homotetramer. It depends on Mg(2+) as a cofactor. Requires Na(+) as cofactor.

The catalysed reaction is Hydrolysis of terminal non-reducing beta-D-galactose residues in beta-D-galactosides.. This chain is Beta-galactosidase, found in Enterobacter cloacae.